The sequence spans 274 residues: AA9 family lytic polysaccharide monooxygenase A (274 aa).

The N-terminal stretch at 1-22 (MHVPQFISTGALLALLARPAAA) is a signal peptide. H23 provides a ligand contact to Cu(2+). Cysteines 63 and 194 form a disulfide. (1,4-beta-D-glucosyl)n contacts are provided by G67, D98, and S100. H101 contacts Cu(2+). H174 is an O2 binding site. D177 contributes to the (1,4-beta-D-glucosyl)n binding site. Y191 contributes to the Cu(2+) binding site.

This sequence belongs to the polysaccharide monooxygenase AA9 family. Cu(2+) is required as a cofactor.

Its subcellular location is the secreted. It carries out the reaction [(1-&gt;4)-beta-D-glucosyl]n+m + reduced acceptor + O2 = 4-dehydro-beta-D-glucosyl-[(1-&gt;4)-beta-D-glucosyl]n-1 + [(1-&gt;4)-beta-D-glucosyl]m + acceptor + H2O.. In terms of biological role, lytic polysaccharide monooxygenase (LPMO) that depolymerizes crystalline and amorphous polysaccharides via the oxidation of scissile alpha- or beta-(1-4)-glycosidic bonds, yielding C4 oxidation products. Catalysis by LPMOs requires the reduction of the active-site copper from Cu(II) to Cu(I) by a reducing agent and H(2)O(2) or O(2) as a cosubstrate. Cleaves a range of polysaccharides, including cellulose, xyloglucan, mixed-linkage glucan and glucomannan. In Collariella virescens (Soil fungus), this protein is AA9 family lytic polysaccharide monooxygenase A.